A 469-amino-acid polypeptide reads, in one-letter code: Equisetin cluster transcription factor eqxR (469 aa).

A DNA-binding region (zn(2)-C6 fungal-type) is located at residues 13-47 (CDRCRSHKLKCTVAPENSRSGSNRCTRCIRAQVTC). The tract at residues 58–84 (STNVKKADIKSGTNSQETTSMQASTIV) is disordered. Residues 68 to 82 (SGTNSQETTSMQAST) show a composition bias toward polar residues.

The protein localises to the nucleus. In terms of biological role, transcription factor that regulates the expression of the gene cluster that mediates the biosynthesis of Equisetin. The protein is Equisetin cluster transcription factor eqxR of Fusarium heterosporum.